Here is a 353-residue protein sequence, read N- to C-terminus: Purine nucleoside phosphorylase (353 aa).

Positions 1 to 16 (MSKFSYLQNGKASTNG) are enriched in polar residues. The disordered stretch occupies residues 1–42 (MSKFSYLQNGKASTNGVPHANGHHQQHQNGHSNGVARNGGTA). Residues Ser-98, His-129, 149–151 (RFH), and Ala-181 contribute to the phosphate site. A purine D-ribonucleoside is bound at residue Glu-266. Ser-285 is a phosphate binding site. An a purine D-ribonucleoside-binding site is contributed by Asn-308.

The protein belongs to the PNP/MTAP phosphorylase family. As to quaternary structure, homotrimer.

It catalyses the reaction inosine + phosphate = alpha-D-ribose 1-phosphate + hypoxanthine. The catalysed reaction is guanosine + phosphate = alpha-D-ribose 1-phosphate + guanine. It carries out the reaction 2'-deoxyguanosine + phosphate = 2-deoxy-alpha-D-ribose 1-phosphate + guanine. The enzyme catalyses 2'-deoxyinosine + phosphate = 2-deoxy-alpha-D-ribose 1-phosphate + hypoxanthine. It functions in the pathway purine metabolism; purine nucleoside salvage. Inhibited by 5'-deaza-1'-aza-2c-deoxy-1'-(9-methylene) immucillin-H (DADMe-ImmH). In terms of biological role, as part of the purine salvage pathway, catalyzes the phosphorolytic breakdown of the N-glycosidic bond in the beta-(deoxy)ribonucleoside molecules, with the formation of the corresponding free purine bases and pentose-1-phosphate. Preferentially acts on 2'-deoxyinosine and inosine, and to a lesser extent on 2'-deoxyguanosine and guanosine. Has no activity towards adenosine or 2'-deoxyadenosine. The polypeptide is Purine nucleoside phosphorylase (Anopheles gambiae (African malaria mosquito)).